Reading from the N-terminus, the 419-residue chain is Gamma-glutamyl phosphate reductase (419 aa).

It belongs to the gamma-glutamyl phosphate reductase family.

It is found in the cytoplasm. It carries out the reaction L-glutamate 5-semialdehyde + phosphate + NADP(+) = L-glutamyl 5-phosphate + NADPH + H(+). It participates in amino-acid biosynthesis; L-proline biosynthesis; L-glutamate 5-semialdehyde from L-glutamate: step 2/2. In terms of biological role, catalyzes the NADPH-dependent reduction of L-glutamate 5-phosphate into L-glutamate 5-semialdehyde and phosphate. The product spontaneously undergoes cyclization to form 1-pyrroline-5-carboxylate. The protein is Gamma-glutamyl phosphate reductase of Marinomonas sp. (strain MWYL1).